The following is a 204-amino-acid chain: Probable chorismate pyruvate-lyase (204 aa).

Substrate is bound by residues Arg75, Leu113, and Glu160.

The protein belongs to the UbiC family.

It is found in the cytoplasm. The enzyme catalyses chorismate = 4-hydroxybenzoate + pyruvate. It participates in cofactor biosynthesis; ubiquinone biosynthesis. Its function is as follows. Removes the pyruvyl group from chorismate, with concomitant aromatization of the ring, to provide 4-hydroxybenzoate (4HB) for the ubiquinone pathway. The chain is Probable chorismate pyruvate-lyase from Alcanivorax borkumensis (strain ATCC 700651 / DSM 11573 / NCIMB 13689 / SK2).